Consider the following 395-residue polypeptide: Chaperone protein DnaJ 1 (395 aa).

The 66-residue stretch at 10 to 75 (DFYQELGVSS…AKRKEYDETR (66 aa)) folds into the J domain. The CR-type zinc-finger motif lies at 164–242 (GVAMPLRLTS…CKGTGVTTRT (79 aa)). 8 residues coordinate Zn(2+): C177, C180, C194, C197, C216, C219, C230, and C233. CXXCXGXG motif repeat units follow at residues 177–184 (CTNCHGSG), 194–201 (CPTCNGSG), 216–223 (CTDCRGSG), and 230–237 (CEECKGTG).

It belongs to the DnaJ family. In terms of assembly, homodimer. Zn(2+) is required as a cofactor.

It localises to the cytoplasm. Participates actively in the response to hyperosmotic and heat shock by preventing the aggregation of stress-denatured proteins and by disaggregating proteins, also in an autonomous, DnaK-independent fashion. Unfolded proteins bind initially to DnaJ; upon interaction with the DnaJ-bound protein, DnaK hydrolyzes its bound ATP, resulting in the formation of a stable complex. GrpE releases ADP from DnaK; ATP binding to DnaK triggers the release of the substrate protein, thus completing the reaction cycle. Several rounds of ATP-dependent interactions between DnaJ, DnaK and GrpE are required for fully efficient folding. Also involved, together with DnaK and GrpE, in the DNA replication of plasmids through activation of initiation proteins. This is Chaperone protein DnaJ 1 from Mycobacterium bovis (strain ATCC BAA-935 / AF2122/97).